The primary structure comprises 6486 residues: Tyrocidine synthase 3 (6486 aa).

The tract at residues 466 to 1038 (IFELIAEQAS…VAELARFLSR (573 aa)) is domain 1 (asparagine-activating). 6 Carrier domains span residues 965-1040 (APQN…SRSE), 2002-2077 (APRN…AAAR), 3040-3115 (APTN…ATSG), 4075-4150 (AAQN…AESA), 5119-5194 (APRS…EETA), and 6162-6237 (APRN…THKR). O-(pantetheine 4'-phosphoryl)serine is present on residues serine 1000, serine 2037, serine 3075, serine 4110, serine 5154, and serine 6197. Positions 1521-2070 (YEEYALTYRE…FESPTIAGLA (550 aa)) are domain 2 (glutamine-activating). The interval 2536–3113 (NKTLQALFEE…IKALAQYVAT (578 aa)) is domain 3 (tyrosine-activating). Residues 3590–4149 (EHAAVVMDGQ…HELAAHIAES (560 aa)) are domain 4 (valine-activating). Residues 4606–5203 (YPTDKTFQKL…AKGNVFSIEP (598 aa)) are domain 5 (ornithine-activating). The interval 5658 to 6245 (LHQLFEEQVD…KRFESRYGTA (588 aa)) is domain 6 (leucine-activating).

The protein belongs to the ATP-dependent AMP-binding enzyme family. Large multienzyme complex of TycA, TycB and TycC. The cofactor is pantetheine 4'-phosphate.

It participates in antibiotic biosynthesis; tyrocidine biosynthesis. In terms of biological role, incorporates six amino acids (for tyrocidine A, Asn, Gln, Tyr, Val, Orn, and Leu) in their L-configuration into the peptide product. This Brevibacillus parabrevis protein is Tyrocidine synthase 3 (tycC).